Here is a 188-residue protein sequence, read N- to C-terminus: dCTP deaminase (188 aa).

109-114 (KSTYAR) contributes to the dCTP binding site. Catalysis depends on glutamate 135, which acts as the Proton donor/acceptor. DCTP contacts are provided by glutamine 154, tyrosine 168, and glutamine 178.

The protein belongs to the dCTP deaminase family. In terms of assembly, homotrimer.

The catalysed reaction is dCTP + H2O + H(+) = dUTP + NH4(+). It participates in pyrimidine metabolism; dUMP biosynthesis; dUMP from dCTP (dUTP route): step 1/2. Its function is as follows. Catalyzes the deamination of dCTP to dUTP. In Helicobacter pylori (strain P12), this protein is dCTP deaminase.